A 354-amino-acid polypeptide reads, in one-letter code: Uroporphyrinogen decarboxylase (354 aa).

Residues 27-31 (RQAGR), aspartate 77, tyrosine 154, threonine 209, and histidine 327 contribute to the substrate site.

Belongs to the uroporphyrinogen decarboxylase family. Homodimer.

It localises to the cytoplasm. It catalyses the reaction uroporphyrinogen III + 4 H(+) = coproporphyrinogen III + 4 CO2. It functions in the pathway porphyrin-containing compound metabolism; protoporphyrin-IX biosynthesis; coproporphyrinogen-III from 5-aminolevulinate: step 4/4. Functionally, catalyzes the decarboxylation of four acetate groups of uroporphyrinogen-III to yield coproporphyrinogen-III. This is Uroporphyrinogen decarboxylase from Klebsiella pneumoniae (strain 342).